We begin with the raw amino-acid sequence, 1218 residues long: Protein jagged-1 (1218 aa).

A signal peptide spans 1–33 (MRSPRTRGRPGRPLSLLLALLCALRAKVCGASG). Topologically, residues 34 to 1067 (QFELEILSMQ…QRRPLKNRTD (1034 aa)) are extracellular. An N-linked (GlcNAc...) asparagine glycan is attached at asparagine 143. The 45-residue stretch at 185–229 (VTCDDHYYGFGCNKFCRPRDDFFGHYACDQNGNKTCMEGWMGPDC) folds into the DSL domain. 2 disulfides stabilise this stretch: cysteine 187–cysteine 196 and cysteine 200–cysteine 212. The important for interaction with NOTCH1 stretch occupies residues 199 to 207 (FCRPRDDFF). The N-linked (GlcNAc...) asparagine glycan is linked to asparagine 217. 40 cysteine pairs are disulfide-bonded: cysteine 220/cysteine 229, cysteine 234/cysteine 245, cysteine 238/cysteine 251, cysteine 253/cysteine 262, cysteine 265/cysteine 276, cysteine 271/cysteine 282, cysteine 284/cysteine 293, cysteine 300/cysteine 312, cysteine 306/cysteine 322, cysteine 324/cysteine 333, cysteine 340/cysteine 351, cysteine 345/cysteine 360, cysteine 362/cysteine 371, cysteine 378/cysteine 389, cysteine 383/cysteine 398, cysteine 400/cysteine 409, cysteine 416/cysteine 427, cysteine 421/cysteine 436, cysteine 438/cysteine 447, cysteine 454/cysteine 464, cysteine 458/cysteine 473, cysteine 475/cysteine 484, cysteine 491/cysteine 502, cysteine 496/cysteine 511, cysteine 513/cysteine 522, cysteine 529/cysteine 540, cysteine 534/cysteine 549, cysteine 551/cysteine 560, cysteine 578/cysteine 605, cysteine 599/cysteine 615, cysteine 617/cysteine 626, cysteine 633/cysteine 644, cysteine 638/cysteine 653, cysteine 655/cysteine 664, cysteine 671/cysteine 682, cysteine 676/cysteine 691, cysteine 693/cysteine 702, cysteine 709/cysteine 720, cysteine 714/cysteine 729, and cysteine 731/cysteine 740. The EGF-like 1 domain occupies 230–263 (NKAICRQGCSPKHGSCKLPGDCRCQYGWQGLYCD). The 31-residue stretch at 264-294 (KCIPHPGCVHGTCNEPWQCLCETNWGGQLCD) folds into the EGF-like 2; atypical domain. EGF-like domains lie at 296–334 (DLNY…PNCE) and 336–372 (AEHA…PTCS). An EGF-like 5; calcium-binding domain is found at 374-410 (NIDDCSPNNCSHGGTCQDLVNGFKCVCPPQWTGKTCQ). Asparagine 382 carries an N-linked (GlcNAc...) asparagine glycan. Residues 412–448 (DANECEAKPCVNARSCKNLIASYYCDCLPGWMGQNCD) form the EGF-like 6; calcium-binding domain. An EGF-like 7; calcium-binding domain is found at 450–485 (NINDCLGQCQNDASCRDLVNGYRCICPPGYAGDHCE). Positions 487–523 (DIDECASNPCLNGGHCQNEINRFQCLCPTGFSGNLCQ) constitute an EGF-like 8; calcium-binding domain. 2 consecutive EGF-like domains span residues 525-561 (DIDY…KNCS) and 586-627 (DTPE…TYCH). Asparagine 559 is a glycosylation site (N-linked (GlcNAc...) asparagine). An EGF-like 11; calcium-binding domain is found at 629-665 (NINDCESNPCKNGGTCIDGVNSYKCICSDGWEGAHCE). The EGF-like 12; calcium-binding domain occupies 667 to 703 (NINDCSQNPCHYGGTCRDLVNDFYCDCKNGWKGKTCH). EGF-like domains follow at residues 705–741 (RDSQ…TTCN) and 744–780 (RNSS…PICT). An N-linked (GlcNAc...) asparagine glycan is attached at asparagine 745. 9 cysteine pairs are disulfide-bonded: cysteine 748/cysteine 759, cysteine 753/cysteine 768, cysteine 770/cysteine 779, cysteine 786/cysteine 797, cysteine 791/cysteine 806, cysteine 808/cysteine 817, cysteine 824/cysteine 835, cysteine 829/cysteine 844, and cysteine 846/cysteine 855. In terms of domain architecture, EGF-like 15; calcium-binding spans 782 to 818 (NTNDCSPHPCYNSGTCVDGDNWYRCECAPGFAGPDCR). Positions 820–856 (NINECQSSPCAFGATCVDEINGYQCICPPGHSGAKCH) constitute an EGF-like 16; calcium-binding domain. Residues asparagine 960, asparagine 991, asparagine 1045, and asparagine 1064 are each glycosylated (N-linked (GlcNAc...) asparagine). Residues 1068-1093 (FLVPLLSSVLTVAWVCCLVTAFYWCV) form a helical membrane-spanning segment. The Cytoplasmic portion of the chain corresponds to 1094-1218 (RKRRKPSSHT…QSLNRMEYIV (125 aa)). Residues 1181 to 1218 (REEKAPSGTPTKHPNWTNKQDNRDLESAQSLNRMEYIV) form a disordered region. Positions 1188–1199 (GTPTKHPNWTNK) are enriched in polar residues.

Interacts with NOTCH1, NOTCH2 and NOTCH3. In terms of tissue distribution, widely expressed in many tissues, with highest expression in brain, heart, muscle and thymus.

The protein resides in the membrane. It is found in the cell membrane. Ligand for multiple Notch receptors and involved in the mediation of Notch signaling. May be involved in cell-fate decisions during hematopoiesis. Seems to be involved in early and late stages of mammalian cardiovascular development. Inhibits myoblast differentiation. May regulate fibroblast growth factor-induced angiogenesis. The protein is Protein jagged-1 (Jag1) of Mus musculus (Mouse).